The chain runs to 226 residues: ATP-dependent dethiobiotin synthetase BioD (226 aa).

Residue 12–17 participates in ATP binding; the sequence is EVGKTV. A Mg(2+)-binding site is contributed by Thr-16. Residue Lys-39 is part of the active site. Position 43 (Thr-43) interacts with substrate. ATP is bound by residues Asp-47, 108 to 111, 168 to 169, and 200 to 202; these read EALG, NC, and PYI. Mg(2+) is bound by residues Asp-47 and Glu-108.

This sequence belongs to the dethiobiotin synthetase family. As to quaternary structure, homodimer. Mg(2+) is required as a cofactor.

It is found in the cytoplasm. It catalyses the reaction (7R,8S)-7,8-diammoniononanoate + CO2 + ATP = (4R,5S)-dethiobiotin + ADP + phosphate + 3 H(+). The enzyme catalyses (7R,8S)-8-amino-7-(carboxyamino)nonanoate + ATP = (4R,5S)-dethiobiotin + ADP + phosphate + H(+). The protein operates within cofactor biosynthesis; biotin biosynthesis; biotin from 7,8-diaminononanoate: step 1/2. Catalyzes a mechanistically unusual reaction, the ATP-dependent insertion of CO2 between the N7 and N8 nitrogen atoms of 7,8-diaminopelargonic acid (DAPA, also called 7,8-diammoniononanoate) to form a ureido ring. This cyanobacterium does not encode bioA (which catalyzes the formation of the precursor for this reaction in the cannonical pathway), instead it encodes bioU, which replaces bioA and also performs the first half of the cannonical BioD reaction. Thus in this organism BioD has a different substrate. The protein is ATP-dependent dethiobiotin synthetase BioD of Gloeothece citriformis (strain PCC 7424) (Cyanothece sp. (strain PCC 7424)).